We begin with the raw amino-acid sequence, 150 residues long: D-aminoacyl-tRNA deacylase (150 aa).

The Gly-cisPro motif, important for rejection of L-amino acids motif lies at 138–139 (GP).

It belongs to the DTD family. As to quaternary structure, homodimer.

It localises to the cytoplasm. The catalysed reaction is glycyl-tRNA(Ala) + H2O = tRNA(Ala) + glycine + H(+). It carries out the reaction a D-aminoacyl-tRNA + H2O = a tRNA + a D-alpha-amino acid + H(+). In terms of biological role, an aminoacyl-tRNA editing enzyme that deacylates mischarged D-aminoacyl-tRNAs. Also deacylates mischarged glycyl-tRNA(Ala), protecting cells against glycine mischarging by AlaRS. Acts via tRNA-based rather than protein-based catalysis; rejects L-amino acids rather than detecting D-amino acids in the active site. By recycling D-aminoacyl-tRNA to D-amino acids and free tRNA molecules, this enzyme counteracts the toxicity associated with the formation of D-aminoacyl-tRNA entities in vivo and helps enforce protein L-homochirality. This is D-aminoacyl-tRNA deacylase from Salinibacter ruber (strain DSM 13855 / M31).